The sequence spans 143 residues: Auxin-responsive protein SAUR67 (143 aa).

It belongs to the ARG7 family.

It is found in the cell membrane. May promote auxin-stimulated organ elongation, such as hypocotyls, stamen filaments and petals. In Arabidopsis thaliana (Mouse-ear cress), this protein is Auxin-responsive protein SAUR67.